Here is a 573-residue protein sequence, read N- to C-terminus: DEAD-box ATP-dependent RNA helicase 47B (573 aa).

The Q motif signature appears at Lys131–Ser159. The 201-residue stretch at Ile162 to Val362 folds into the Helicase ATP-binding domain. An ATP-binding site is contributed by Ser175–Thr182. The DEAD box motif lies at Asp293–Asp296. The Helicase C-terminal domain occupies Thr421 to Leu565.

The protein belongs to the DEAD box helicase family.

It carries out the reaction ATP + H2O = ADP + phosphate + H(+). The chain is DEAD-box ATP-dependent RNA helicase 47B from Oryza sativa subsp. japonica (Rice).